The primary structure comprises 26 residues: Hemocyanin subunit B (26 aa).

This sequence belongs to the tyrosinase family. Hemocyanin subfamily. In terms of tissue distribution, hemolymph.

The protein resides in the secreted. It localises to the extracellular space. Its function is as follows. Hemocyanins are copper-containing oxygen carriers occurring freely dissolved in the hemolymph of many mollusks and arthropods. This chain is Hemocyanin subunit B, found in Carcinus maenas (Common shore crab).